An 895-amino-acid polypeptide reads, in one-letter code: Catenin alpha-3 (895 aa).

Ser56 bears the Phosphoserine mark. A coiled-coil region spans residues 74 to 111 (EKIAQEATVLKDELTASLEEVRKESEALKVSAERFTDD). The residue at position 160 (Ser160) is a Phosphoserine. A coiled-coil region spans residues 325–379 (RERIIAECNAIRQALQDLLSEYMNNAGKKERSNTLNIALDNMCKKTRDLRRQLRK). A phosphoserine mark is found at Ser637 and Ser647. A Phosphothreonine modification is found at Thr649.

The protein belongs to the vinculin/alpha-catenin family. Interacts with CTNNB1. Interacts with PKP2. Predominantly expressed in heart and testis. Expressed at lower levels in brain, kidney, liver and skeletal muscle.

The protein resides in the cytoplasm. It is found in the cytoskeleton. The protein localises to the cell junction. It localises to the desmosome. Functionally, may be involved in formation of stretch-resistant cell-cell adhesion complexes. The polypeptide is Catenin alpha-3 (Homo sapiens (Human)).